The primary structure comprises 365 residues: Peptide chain release factor 2 (365 aa).

Glutamine 252 carries the post-translational modification N5-methylglutamine.

It belongs to the prokaryotic/mitochondrial release factor family. Post-translationally, methylated by PrmC. Methylation increases the termination efficiency of RF2.

It is found in the cytoplasm. Its function is as follows. Peptide chain release factor 2 directs the termination of translation in response to the peptide chain termination codons UGA and UAA. This Proteus mirabilis (strain HI4320) protein is Peptide chain release factor 2.